Consider the following 192-residue polypeptide: Crossover junction endodeoxyribonuclease RuvC (192 aa).

Catalysis depends on residues Asp-7, Glu-67, and Asp-140. Mg(2+) is bound by residues Asp-7, Glu-67, and Asp-140. The interval 158–192 (RQSGVPPRTNSRRKSGTGGSWEQFVRQSPNVVVRS) is disordered. A compositionally biased stretch (polar residues) spans 182 to 192 (VRQSPNVVVRS).

It belongs to the RuvC family. In terms of assembly, homodimer which binds Holliday junction (HJ) DNA. The HJ becomes 2-fold symmetrical on binding to RuvC with unstacked arms; it has a different conformation from HJ DNA in complex with RuvA. In the full resolvosome a probable DNA-RuvA(4)-RuvB(12)-RuvC(2) complex forms which resolves the HJ. It depends on Mg(2+) as a cofactor.

It is found in the cytoplasm. It carries out the reaction Endonucleolytic cleavage at a junction such as a reciprocal single-stranded crossover between two homologous DNA duplexes (Holliday junction).. In terms of biological role, the RuvA-RuvB-RuvC complex processes Holliday junction (HJ) DNA during genetic recombination and DNA repair. Endonuclease that resolves HJ intermediates. Cleaves cruciform DNA by making single-stranded nicks across the HJ at symmetrical positions within the homologous arms, yielding a 5'-phosphate and a 3'-hydroxyl group; requires a central core of homology in the junction. The consensus cleavage sequence is 5'-(A/T)TT(C/G)-3'. Cleavage occurs on the 3'-side of the TT dinucleotide at the point of strand exchange. HJ branch migration catalyzed by RuvA-RuvB allows RuvC to scan DNA until it finds its consensus sequence, where it cleaves and resolves the cruciform DNA. This Chlorobium chlorochromatii (strain CaD3) protein is Crossover junction endodeoxyribonuclease RuvC.